The sequence spans 378 residues: Ribosomal RNA large subunit methyltransferase G (378 aa).

The protein belongs to the methyltransferase superfamily. RlmG family.

It is found in the cytoplasm. It catalyses the reaction guanosine(1835) in 23S rRNA + S-adenosyl-L-methionine = N(2)-methylguanosine(1835) in 23S rRNA + S-adenosyl-L-homocysteine + H(+). Functionally, specifically methylates the guanine in position 1835 (m2G1835) of 23S rRNA. This chain is Ribosomal RNA large subunit methyltransferase G, found in Citrobacter koseri (strain ATCC BAA-895 / CDC 4225-83 / SGSC4696).